Consider the following 312-residue polypeptide: Aspartate carbamoyltransferase catalytic subunit (312 aa).

Carbamoyl phosphate-binding residues include R58 and T59. K86 contacts L-aspartate. The carbamoyl phosphate site is built by R108, H136, and Q139. L-aspartate contacts are provided by R169 and R223. G264 and P265 together coordinate carbamoyl phosphate.

The protein belongs to the aspartate/ornithine carbamoyltransferase superfamily. ATCase family. As to quaternary structure, heterododecamer (2C3:3R2) of six catalytic PyrB chains organized as two trimers (C3), and six regulatory PyrI chains organized as three dimers (R2).

It carries out the reaction carbamoyl phosphate + L-aspartate = N-carbamoyl-L-aspartate + phosphate + H(+). Its pathway is pyrimidine metabolism; UMP biosynthesis via de novo pathway; (S)-dihydroorotate from bicarbonate: step 2/3. Functionally, catalyzes the condensation of carbamoyl phosphate and aspartate to form carbamoyl aspartate and inorganic phosphate, the committed step in the de novo pyrimidine nucleotide biosynthesis pathway. This is Aspartate carbamoyltransferase catalytic subunit from Syntrophomonas wolfei subsp. wolfei (strain DSM 2245B / Goettingen).